A 203-amino-acid polypeptide reads, in one-letter code: A-type ATP synthase subunit E (203 aa).

Belongs to the V-ATPase E subunit family. In terms of assembly, might form a homodimer. Interacts with subunit H via residues 41-60. The A-type ATPase is composed of subunits A(3), B(3), C, D, E(1 or 2), F, H(2), I and K(x).

The protein resides in the cell membrane. Component of the A-type ATP synthase that produces ATP from ADP in the presence of a proton gradient across the membrane. The protein is A-type ATP synthase subunit E of Methanocaldococcus jannaschii (strain ATCC 43067 / DSM 2661 / JAL-1 / JCM 10045 / NBRC 100440) (Methanococcus jannaschii).